The sequence spans 146 residues: Deoxyuridine 5'-triphosphate nucleotidohydrolase (146 aa).

Substrate contacts are provided by residues 66–68, Asn79, 83–85, and Lys93; these read RSG and TVD.

The protein belongs to the dUTPase family. Requires Mg(2+) as cofactor.

The catalysed reaction is dUTP + H2O = dUMP + diphosphate + H(+). It participates in pyrimidine metabolism; dUMP biosynthesis; dUMP from dCTP (dUTP route): step 2/2. Functionally, this enzyme is involved in nucleotide metabolism: it produces dUMP, the immediate precursor of thymidine nucleotides and it decreases the intracellular concentration of dUTP so that uracil cannot be incorporated into DNA. This chain is Deoxyuridine 5'-triphosphate nucleotidohydrolase, found in Fusobacterium nucleatum subsp. nucleatum (strain ATCC 25586 / DSM 15643 / BCRC 10681 / CIP 101130 / JCM 8532 / KCTC 2640 / LMG 13131 / VPI 4355).